The sequence spans 349 residues: Small ribosomal subunit biogenesis GTPase RsgA (349 aa).

Over residues 1–11 the composition is skewed to basic residues; the sequence is MSKKKLSKGQQ. The tract at residues 1–35 is disordered; that stretch reads MSKKKLSKGQQRRVSANHQRRLKHADSKVEWDDSQ. The CP-type G domain occupies 111 to 272; it reads YDGLKPIAAN…VIDSPGVREF (162 aa). GTP is bound by residues 158–161 and 212–220; these read NKID and GQSGVGKSS. Zn(2+) is bound by residues Cys296, Cys301, His303, and Cys309.

This sequence belongs to the TRAFAC class YlqF/YawG GTPase family. RsgA subfamily. As to quaternary structure, monomer. Associates with 30S ribosomal subunit, binds 16S rRNA. Zn(2+) is required as a cofactor.

The protein localises to the cytoplasm. Its function is as follows. One of several proteins that assist in the late maturation steps of the functional core of the 30S ribosomal subunit. Helps release RbfA from mature subunits. May play a role in the assembly of ribosomal proteins into the subunit. Circularly permuted GTPase that catalyzes slow GTP hydrolysis, GTPase activity is stimulated by the 30S ribosomal subunit. The chain is Small ribosomal subunit biogenesis GTPase RsgA from Dickeya dadantii (strain 3937) (Erwinia chrysanthemi (strain 3937)).